An 860-amino-acid polypeptide reads, in one-letter code: Leucine--tRNA ligase (860 aa).

Positions 42–52 (PYPSGRLHMGH) match the 'HIGH' region motif. The 'KMSKS' region signature appears at 619–623 (KMSKS). Lys-622 is an ATP binding site.

It belongs to the class-I aminoacyl-tRNA synthetase family.

The protein localises to the cytoplasm. It carries out the reaction tRNA(Leu) + L-leucine + ATP = L-leucyl-tRNA(Leu) + AMP + diphosphate. The chain is Leucine--tRNA ligase from Sodalis glossinidius (strain morsitans).